The following is a 297-amino-acid chain: Calponin-1 (297 aa).

The region spanning 28 to 131 is the Calponin-homology (CH) domain; the sequence is HQREQELREW…STLLALASMA (104 aa). Calponin-like repeat units follow at residues 164 to 189, 204 to 229, and 243 to 268; these read IGLQ…RHLY, ISLQ…RQIF, and VSLQ…RQVY. Threonine 170 is modified (phosphothreonine; by ROCK2). Phosphoserine; by ROCK2 is present on serine 175. Threonine 180 and threonine 184 each carry phosphothreonine; by ROCK2. A Phosphothreonine; by ROCK2 modification is found at threonine 259.

The protein belongs to the calponin family.

Its function is as follows. Thin filament-associated protein that is implicated in the regulation and modulation of smooth muscle contraction. It is capable of binding to actin, calmodulin and tropomyosin. The interaction of calponin with actin inhibits the actomyosin Mg-ATPase activity. This is Calponin-1 (CNN1) from Bos taurus (Bovine).